The following is a 624-amino-acid chain: Vitamin B12 transporter BtuB (624 aa).

The N-terminal stretch at 1–21 is a signal peptide; sequence MTIKKYTLLTALSVTAFSGWA. Residues 31–38 carry the TonB box motif; that stretch reads NEMVVTAN. The TBDR plug domain maps to 43–157; the sequence is PKSSVLAPVD…IGGVVNIITE (115 aa). Cyanocob(III)alamin is bound by residues leucine 88, serine 90, asparagine 97, and 115–116; that span reads IS. The region spanning 160 to 624 is the TBDR beta-barrel domain; sequence TLGSTLTAGL…EYYFTGSYNF (465 aa). 3 beta stranded membrane-spanning segments follow: residues 163–170, 174–183, and 189–200; these read STLTAGLG, YQNYNGSTQQ, and TTITLAGNYDYS. Positions 204, 216, 218, and 220 each coordinate Ca(2+). The next 2 membrane-spanning stretches (beta stranded) occupy residues 222–232 and 237–253; these read YLGKMLWLGAN and EQFSGFVRGYGFDNRSD. The Ca(2+) site is built by tyrosine 254, aspartate 255, and aspartate 266. The next 17 beta stranded transmembrane spans lie at 268–282, 284–301, 314–330, 333–342, 358–374, 376–386, 390–405, 408–422, 440–449, 455–464, 481–498, 502–517, 525–537, 543–557, 568–582, 595–606, and 612–624; these read RSLSSRTYDTGINFS, GGYASQLIGSYSRTQDYN, TLDDISQYNLQWTNTYQ, LGNVGGGLDW, YEQRNTGVYGTVQQFVG, VTLEGAIRGDD, FGWHTTWQSSAGWEFV, YRLIGSYGTAFKAPN, ESTQWEAAIT, LDWRLSAYRN, YYNVEKATIKGVEWTGSF, PLSHQVTLEYLDPRNA, RRAKQQVKYQLDW, DWSVTYQYIGQRYDS, PVKLAGISLWDLAVS, IANLFDKDYEMV, and PGREYYFTGSYNF. Threonine 314 is a cyanocob(III)alamin binding site. Arginine 525 contacts cyanocob(III)alamin. Positions 607 to 624 match the TonB C-terminal box motif; that stretch reads YGYQTPGREYYFTGSYNF.

Belongs to the TonB-dependent receptor family. BtuB (TC 1.B.14.3.1) subfamily.

It localises to the cell outer membrane. In terms of biological role, involved in the active translocation of vitamin B12 (cyanocobalamin) across the outer membrane to the periplasmic space. It derives its energy for transport by interacting with the trans-periplasmic membrane protein TonB. The sequence is that of Vitamin B12 transporter BtuB from Yersinia pseudotuberculosis serotype O:1b (strain IP 31758).